The following is a 375-amino-acid chain: MKITSTIPAVLLGLAPLSAAVSVSGSAEGFASGVTGGGDAEAQIPSDIDELKEWLTDDTPRVIVLDKEYDFTESEGTTSGTVCASWGTGSGCQKIIQDDCGDSPSSQATWYTAGTTGIDVASDKTILGDGDKGVIKGKGLRFRDGVSNIIVQNIEISDLNPEYVWGGDALYFDGSDLIWIDHVTTARTGRQHYTFGYETNTRITLSNNFINGETTYSTGCDGYTYWTFEMVGEADQITLQNNYIYMTAGRSPALSGGTLLHAVNNVWEKNNGHALEGGDAGARGIFEGNAWIGVSTIVGDYAGRLFNAPDSSSAGDCESALGRACEVNAVSDSGDLTAYTDTSFFSDFSGLTIAPATSATDAQSSVPNNAGMGKL.

An N-terminal signal peptide occupies residues 1–20; sequence MKITSTIPAVLLGLAPLSAA. Disulfide bonds link Cys83–Cys100 and Cys92–Cys220. Arg250 is a catalytic residue. Cys317 and Cys325 are disulfide-bonded.

It belongs to the polysaccharide lyase 1 family.

It is found in the secreted. It carries out the reaction Eliminative cleavage of (1-&gt;4)-alpha-D-galacturonan methyl ester to give oligosaccharides with 4-deoxy-6-O-methyl-alpha-D-galact-4-enuronosyl groups at their non-reducing ends.. Functionally, pectinolytic enzymes consist of four classes of enzymes: pectin lyase, polygalacturonase, pectin methylesterase and rhamnogalacturonase. Among pectinolytic enzymes, pectin lyase is the most important in depolymerization of pectin, since it cleaves internal glycosidic bonds of highly methylated pectins. The polypeptide is Probable pectin lyase C (pelC) (Aspergillus oryzae (strain ATCC 42149 / RIB 40) (Yellow koji mold)).